The sequence spans 835 residues: Protein translocase subunit SecA (835 aa).

ATP contacts are provided by residues glutamine 85, 103-107 (GEGKT), and aspartate 492. Cysteine 819, cysteine 821, cysteine 830, and cysteine 831 together coordinate Zn(2+).

It belongs to the SecA family. In terms of assembly, monomer and homodimer. Part of the essential Sec protein translocation apparatus which comprises SecA, SecYEG and auxiliary proteins SecDF. Other proteins may also be involved. Zn(2+) serves as cofactor.

It is found in the cell membrane. The protein resides in the cytoplasm. The enzyme catalyses ATP + H2O + cellular proteinSide 1 = ADP + phosphate + cellular proteinSide 2.. Functionally, part of the Sec protein translocase complex. Interacts with the SecYEG preprotein conducting channel. Has a central role in coupling the hydrolysis of ATP to the transfer of proteins into and across the cell membrane, serving as an ATP-driven molecular motor driving the stepwise translocation of polypeptide chains across the membrane. In Clostridium botulinum (strain Kyoto / Type A2), this protein is Protein translocase subunit SecA.